Here is a 338-residue protein sequence, read N- to C-terminus: Probable 1-aminocyclopropane-1-carboxylate deaminase (338 aa).

Lysine 51 is subject to N6-(pyridoxal phosphate)lysine. Serine 78 serves as the catalytic Nucleophile.

It belongs to the ACC deaminase/D-cysteine desulfhydrase family. Pyridoxal 5'-phosphate is required as a cofactor.

The catalysed reaction is 1-aminocyclopropane-1-carboxylate + H2O = 2-oxobutanoate + NH4(+). In terms of biological role, catalyzes a cyclopropane ring-opening reaction, the irreversible conversion of 1-aminocyclopropane-1-carboxylate (ACC) to ammonia and alpha-ketobutyrate. The chain is Probable 1-aminocyclopropane-1-carboxylate deaminase from Schizosaccharomyces pombe (strain 972 / ATCC 24843) (Fission yeast).